Here is a 212-residue protein sequence, read N- to C-terminus: Sclerostin (212 aa).

The signal sequence occupies residues 1-23 (MQLSLALCLVCLLVHAAFRVVEG). The N-linked (GlcNAc...) asparagine glycan is linked to Asn-52. Intrachain disulfides connect Cys-79–Cys-133, Cys-93–Cys-147, Cys-104–Cys-164, and Cys-108–Cys-166. The CTCK domain occupies 81–171 (ELHFTRYVTD…ASCKCKRLTR (91 aa)). Asn-174 carries N-linked (GlcNAc...) asparagine glycosylation. The segment at 179 to 212 (KDFGPEAARPQTGRKLRPRARGTKASRAELENAY) is disordered. Residues 190-202 (TGRKLRPRARGTK) show a composition bias toward basic residues.

The protein belongs to the sclerostin family. Interacts with LRP4 (via the extracellular domain); the interaction facilitates the inhibition of Wnt signaling. Interacts with LRP5 (via the first two YWTD-EGF repeat domains); the interaction inhibits Wnt-mediated signaling. Interacts with LRP6.

It localises to the secreted. Its subcellular location is the extracellular space. It is found in the extracellular matrix. Its function is as follows. Negative regulator of bone growth that acts through inhibition of Wnt signaling and bone formation. This chain is Sclerostin, found in Bos taurus (Bovine).